A 366-amino-acid polypeptide reads, in one-letter code: Phospho-N-acetylmuramoyl-pentapeptide-transferase (366 aa).

The next 10 membrane-spanning stretches (helical) occupy residues 3-23 (QIFIAGAVAFLAAVLFTPVLI), 55-75 (IAILVGITLGYIVAVLVGLVF), 80-100 (PGVSGWLVLGLTLALGGVGFA), 118-138 (AKLICQLVIAIAFGVMILQFP), 161-181 (IAVGGAVIGMILFLIFINIVI), 197-217 (LASGVTAIVMGAYVLITFWQF), 235-255 (PLDLAMLASAGLGACLGFLWW), 262-282 (IFMGDTGSLALGGLVAGLSIT), 287-307 (LLMIIVGAIFVLETVSVVIQV), and 341-361 (FWLLAALAAMTGFGLFYGEWL).

This sequence belongs to the glycosyltransferase 4 family. MraY subfamily. The cofactor is Mg(2+).

It localises to the cell membrane. It catalyses the reaction UDP-N-acetyl-alpha-D-muramoyl-L-alanyl-gamma-D-glutamyl-meso-2,6-diaminopimeloyl-D-alanyl-D-alanine + di-trans,octa-cis-undecaprenyl phosphate = di-trans,octa-cis-undecaprenyl diphospho-N-acetyl-alpha-D-muramoyl-L-alanyl-D-glutamyl-meso-2,6-diaminopimeloyl-D-alanyl-D-alanine + UMP. Its pathway is cell wall biogenesis; peptidoglycan biosynthesis. Catalyzes the initial step of the lipid cycle reactions in the biosynthesis of the cell wall peptidoglycan: transfers peptidoglycan precursor phospho-MurNAc-pentapeptide from UDP-MurNAc-pentapeptide onto the lipid carrier undecaprenyl phosphate, yielding undecaprenyl-pyrophosphoryl-MurNAc-pentapeptide, known as lipid I. In Corynebacterium urealyticum (strain ATCC 43042 / DSM 7109), this protein is Phospho-N-acetylmuramoyl-pentapeptide-transferase.